A 152-amino-acid chain; its full sequence is Nucleoside diphosphate kinase B (152 aa).

The interval 1-66 (MAHQERTFIA…DRPFYPGLVK (66 aa)) is interaction with AKAP13. ATP contacts are provided by lysine 12, phenylalanine 60, arginine 88, threonine 94, arginine 105, and asparagine 115. Catalysis depends on histidine 118, which acts as the Pros-phosphohistidine intermediate.

This sequence belongs to the NDK family. As to quaternary structure, hexamer of two different chains: An and B (A6, A5B, A4B2, A3B3, A2B4, AB5, B6). Interacts with CAPN8. Interacts with AKAP13. Interacts with ITGB1BP1 (via C-terminal domain region). Interacts with BCL2L10. Mg(2+) is required as a cofactor. As to expression, ubiquitous.

It localises to the cytoplasm. It is found in the cell projection. The protein resides in the lamellipodium. Its subcellular location is the ruffle. The protein localises to the nucleus. The catalysed reaction is a 2'-deoxyribonucleoside 5'-diphosphate + ATP = a 2'-deoxyribonucleoside 5'-triphosphate + ADP. It catalyses the reaction a ribonucleoside 5'-diphosphate + ATP = a ribonucleoside 5'-triphosphate + ADP. It carries out the reaction ATP + protein L-histidine = ADP + protein N-phospho-L-histidine.. Its function is as follows. Major role in the synthesis of nucleoside triphosphates other than ATP. The ATP gamma phosphate is transferred to the NDP beta phosphate via a ping-pong mechanism, using a phosphorylated active-site intermediate. Negatively regulates Rho activity by interacting with AKAP13/LBC. Acts as a transcriptional activator of the MYC gene; binds DNA non-specifically. Binds to both single-stranded guanine- and cytosine-rich strands within the nuclease hypersensitive element (NHE) III(1) region of the MYC gene promoter. Does not bind to duplex NHE III(1). Has G-quadruplex (G4) DNA-binding activity, which is independent of its nucleotide-binding and kinase activity. Binds both folded and unfolded G4 with similar low nanomolar affinities. Stabilizes folded G4s regardless of whether they are prefolded or not. Exhibits histidine protein kinase activity. The protein is Nucleoside diphosphate kinase B (NME2) of Canis lupus familiaris (Dog).